A 452-amino-acid chain; its full sequence is Flavanone 7-O-glucoside 2''-O-beta-L-rhamnosyltransferase (452 aa).

His-21 serves as the catalytic Proton acceptor. His-21 provides a ligand contact to an anthocyanidin. The active-site Charge relay is Asp-121. Residues 136 to 156 (IAAILFLPLSAVACSFLLHNI) traverse the membrane as a helical segment. UDP-beta-L-rhamnose is bound by residues Ser-268, Val-330, His-347, Gly-351, Ser-352, and Glu-355. Positions 407–436 (KHVVLQEEAKQIRRKANEISESMKKIGDAE) form a coiled coil.

The protein belongs to the UDP-glycosyltransferase family. In terms of assembly, monomer. In terms of tissue distribution, expressed in young fruits and leaves.

It is found in the membrane. It catalyses the reaction flavanone 7-O-beta-D-glucoside + UDP-beta-L-rhamnose = flavanone 7-O-[alpha-L-rhamnosyl-(1-&gt;2)-beta-D-glucoside] + UDP + H(+). Functionally, involved in the production of the bitter neohesperidosides in citrus. Shows a strict specificity for UDP-rhamnose as donor. The sequence is that of Flavanone 7-O-glucoside 2''-O-beta-L-rhamnosyltransferase (C12RT1) from Citrus maxima (Pomelo).